Consider the following 488-residue polypeptide: 3-octaprenyl-4-hydroxybenzoate carboxy-lyase (488 aa).

Asparagine 172 is a binding site for Mn(2+). Residues 175 to 177, 189 to 191, and 194 to 195 contribute to the prenylated FMN site; these read IYR, RWL, and RG. Glutamate 238 is a binding site for Mn(2+). The active-site Proton donor is the aspartate 287.

This sequence belongs to the UbiD family. In terms of assembly, homohexamer. The cofactor is prenylated FMN. It depends on Mn(2+) as a cofactor.

The protein resides in the cell membrane. It carries out the reaction a 4-hydroxy-3-(all-trans-polyprenyl)benzoate + H(+) = a 2-(all-trans-polyprenyl)phenol + CO2. It functions in the pathway cofactor biosynthesis; ubiquinone biosynthesis. Functionally, catalyzes the decarboxylation of 3-octaprenyl-4-hydroxy benzoate to 2-octaprenylphenol, an intermediate step in ubiquinone biosynthesis. In Pseudomonas savastanoi pv. phaseolicola (strain 1448A / Race 6) (Pseudomonas syringae pv. phaseolicola (strain 1448A / Race 6)), this protein is 3-octaprenyl-4-hydroxybenzoate carboxy-lyase.